Reading from the N-terminus, the 1024-residue chain is E3 ISG15--protein ligase HERC5 (1024 aa).

A compositionally biased stretch (basic residues) spans 1-13 (MERRSRRKSRRNG). Positions 1–28 (MERRSRRKSRRNGRSTAGKAAATQPAKS) are disordered. RCC1 repeat units lie at residues 96–155 (NMKI…ALSK), 156–208 (GGEL…ALSM), 209–260 (SGNI…LLTQ), 262–312 (GLLF…AYVS), and 314–364 (LGKV…LIMI). The HECT domain occupies 702 to 1024 (ENEDLRKELW…EAINNNRGFG (323 aa)). C994 acts as the Glycyl thioester intermediate in catalysis.

In terms of assembly, (Microbial infection) Interacts with human cytomegalovirus protein UL26; this interaction inhibits global protein ISGylation. As to quaternary structure, (Microbial infection) Interacts with Kaposi's sarcoma-associated herpesvirus protein v-IRF1; this interaction inhibits global protein ISGylation. Binds to CCNA1, CCNB1, CCND1 and CCNE1. Interacts with UBE2L6. Interacts with IRF3, this interaction is marginal in resting cells but enhanced upon viral infection. Interacts with influenza A virus NS1. ISGylated. In terms of tissue distribution, expressed in testis and to a lesser degree in brain, ovary and placenta. Found in most tissues at low levels.

Its subcellular location is the cytoplasm. It is found in the perinuclear region. In terms of biological role, major E3 ligase for ISG15 conjugation. Acts as a positive regulator of innate antiviral response in cells induced by interferon. Functions as part of the ISGylation machinery that recognizes target proteins in a broad and relatively non-specific manner. Catalyzes ISGylation of IRF3 which results in sustained activation, it attenuates IRF3-PIN1 interaction, which antagonizes IRF3 ubiquitination and degradation, and boosts the antiviral response. Mediates ISGylation of the phosphatase PTEN leading to its degradation, thus alleviating its suppression of the PI3K-AKT signaling pathway and promoting the production of cytokines that facilitate bacterial clearance. Interferes with the function of key viral structural proteins such as ebolavirus structural protein VP40 or HIV-1 protein GAG. Catalyzes ISGylation of influenza A viral NS1 which attenuates virulence; ISGylated NS1 fails to form homodimers and thus to interact with its RNA targets. Catalyzes ISGylation of papillomavirus type 16 L1 protein which results in dominant-negative effect on virus infectivity. Physically associated with polyribosomes, broadly modifies newly synthesized proteins in a cotranslational manner. In an interferon-stimulated cell, newly translated viral proteins are primary targets of ISG15. Promotes parkin/PRKN ubiquitin E3 ligase activity by suppressing the intramolecular interaction that maintains its autoinhibited conformation. Its function is as follows. (Microbial infection) Functions as an E3 ligase for ISGylation of hepatitis B virus protein X leading to enhanced viral replication due to increased interferon resistance. The polypeptide is E3 ISG15--protein ligase HERC5 (HERC5) (Homo sapiens (Human)).